We begin with the raw amino-acid sequence, 314 residues long: Acetaldehyde dehydrogenase 1/2 (314 aa).

Residue 12-15 (SGNI) participates in NAD(+) binding. The Acyl-thioester intermediate role is filled by cysteine 130. NAD(+) is bound by residues 161–169 (SAGPGTRAN) and asparagine 288.

It belongs to the acetaldehyde dehydrogenase family.

The enzyme catalyses acetaldehyde + NAD(+) + CoA = acetyl-CoA + NADH + H(+). In Rhizorhabdus wittichii (strain DSM 6014 / CCUG 31198 / JCM 15750 / NBRC 105917 / EY 4224 / RW1) (Sphingomonas wittichii), this protein is Acetaldehyde dehydrogenase 1/2.